The chain runs to 157 residues: Succinate dehydrogenase assembly factor 2-A, mitochondrial (157 aa).

This sequence belongs to the SDHAF2 family. In terms of assembly, interacts with the flavoprotein subunit within the SDH catalytic dimer.

It is found in the mitochondrion matrix. Functionally, plays an essential role in the assembly of succinate dehydrogenase (SDH), an enzyme complex (also referred to as respiratory complex II) that is a component of both the tricarboxylic acid (TCA) cycle and the mitochondrial electron transport chain, and which couples the oxidation of succinate to fumarate with the reduction of ubiquinone (coenzyme Q) to ubiquinol. Required for flavinylation (covalent attachment of FAD) of the flavoprotein subunit of the SDH catalytic dimer. In Drosophila willistoni (Fruit fly), this protein is Succinate dehydrogenase assembly factor 2-A, mitochondrial.